Consider the following 878-residue polypeptide: Leucine--tRNA ligase (878 aa).

A 'HIGH' region motif is present at residues 56–66; sequence PYPSGKLHMGH. The 'KMSKS' region signature appears at 630-634; the sequence is KMSKS. Residue Lys633 participates in ATP binding.

Belongs to the class-I aminoacyl-tRNA synthetase family.

The protein localises to the cytoplasm. The catalysed reaction is tRNA(Leu) + L-leucine + ATP = L-leucyl-tRNA(Leu) + AMP + diphosphate. In Prochlorococcus marinus (strain MIT 9313), this protein is Leucine--tRNA ligase.